The primary structure comprises 240 residues: NADH-quinone oxidoreductase subunit C (240 aa).

Positions Met-1–Pro-82 are disordered. A compositionally biased stretch (low complexity) spans Leu-11–Ala-20. Over residues Asp-67 to Pro-82 the composition is skewed to basic and acidic residues.

It belongs to the complex I 30 kDa subunit family. In terms of assembly, NDH-1 is composed of 14 different subunits. Subunits NuoB, C, D, E, F, and G constitute the peripheral sector of the complex.

It is found in the cell inner membrane. The catalysed reaction is a quinone + NADH + 5 H(+)(in) = a quinol + NAD(+) + 4 H(+)(out). Its function is as follows. NDH-1 shuttles electrons from NADH, via FMN and iron-sulfur (Fe-S) centers, to quinones in the respiratory chain. The immediate electron acceptor for the enzyme in this species is believed to be a menaquinone. Couples the redox reaction to proton translocation (for every two electrons transferred, four hydrogen ions are translocated across the cytoplasmic membrane), and thus conserves the redox energy in a proton gradient. In Chloroherpeton thalassium (strain ATCC 35110 / GB-78), this protein is NADH-quinone oxidoreductase subunit C.